A 397-amino-acid chain; its full sequence is MRVIGLMSGTSYDAIDAAAADIRIDGDTLVLTPLGMVSEPYSGELRAAVAAAVPPASTTVGQICQLDTEIGQAFAAVAARANAELCGGSAELISSHGQTMFHWVEGAQVKGTLQLGQPAWIAEKTGCTVVSDLRSRDVATGGQGAPLVSAFDVLWLNGRTSGSVALNLGGIANVTAPGGGGTTADGPAVPIAFDTGPANALIDAAVSEFTAGEQWFDLGGALGAAGTPNVDLLAHLLSEPYYTQPAPKSTGKELFHRDYLLAALRGYESLSLADIVATLTALTARTVADSVKALAATEVVVSGGGTKNPTLMAMLRDELGDIALVSSDELGVTSDIKEALAFAVLGFLTAHGLPGSIASCTGARHASVLGSLTPGSRGLPRITSVPSAPKTMRIEAL.

An ATP-binding site is contributed by 9–16 (GTSYDAID).

This sequence belongs to the anhydro-N-acetylmuramic acid kinase family.

It carries out the reaction 1,6-anhydro-N-acetyl-beta-muramate + ATP + H2O = N-acetyl-D-muramate 6-phosphate + ADP + H(+). It functions in the pathway amino-sugar metabolism; 1,6-anhydro-N-acetylmuramate degradation. The protein operates within cell wall biogenesis; peptidoglycan recycling. Functionally, catalyzes the specific phosphorylation of 1,6-anhydro-N-acetylmuramic acid (anhMurNAc) with the simultaneous cleavage of the 1,6-anhydro ring, generating MurNAc-6-P. Is required for the utilization of anhMurNAc either imported from the medium or derived from its own cell wall murein, and thus plays a role in cell wall recycling. The polypeptide is Anhydro-N-acetylmuramic acid kinase (Rhodococcus erythropolis (strain PR4 / NBRC 100887)).